The following is a 119-amino-acid chain: Large ribosomal subunit protein bL19 (119 aa).

It belongs to the bacterial ribosomal protein bL19 family.

Its function is as follows. This protein is located at the 30S-50S ribosomal subunit interface and may play a role in the structure and function of the aminoacyl-tRNA binding site. The sequence is that of Large ribosomal subunit protein bL19 from Pseudoalteromonas translucida (strain TAC 125).